The sequence spans 373 residues: Anhydro-N-acetylmuramic acid kinase (373 aa).

12–19 is an ATP binding site; the sequence is GTSLDGVD.

It belongs to the anhydro-N-acetylmuramic acid kinase family.

It carries out the reaction 1,6-anhydro-N-acetyl-beta-muramate + ATP + H2O = N-acetyl-D-muramate 6-phosphate + ADP + H(+). The protein operates within amino-sugar metabolism; 1,6-anhydro-N-acetylmuramate degradation. Its pathway is cell wall biogenesis; peptidoglycan recycling. Functionally, catalyzes the specific phosphorylation of 1,6-anhydro-N-acetylmuramic acid (anhMurNAc) with the simultaneous cleavage of the 1,6-anhydro ring, generating MurNAc-6-P. Is required for the utilization of anhMurNAc either imported from the medium or derived from its own cell wall murein, and thus plays a role in cell wall recycling. This is Anhydro-N-acetylmuramic acid kinase from Salmonella paratyphi A (strain ATCC 9150 / SARB42).